The following is a 427-amino-acid chain: Adenylosuccinate synthetase (427 aa).

GTP is bound by residues 12–18 (GDEGKGK) and 40–42 (GHT). Residue D13 is the Proton acceptor of the active site. The Mg(2+) site is built by D13 and G40. IMP-binding positions include 13–16 (DEGK), 38–41 (NAGH), T127, R141, Q222, T237, and R301. H41 serves as the catalytic Proton donor. 297–303 (VVTKRPR) is a binding site for substrate. GTP-binding positions include R303, 329-331 (SLD), and 411-413 (AVG).

The protein belongs to the adenylosuccinate synthetase family. As to quaternary structure, homodimer. Requires Mg(2+) as cofactor.

Its subcellular location is the cytoplasm. The catalysed reaction is IMP + L-aspartate + GTP = N(6)-(1,2-dicarboxyethyl)-AMP + GDP + phosphate + 2 H(+). It participates in purine metabolism; AMP biosynthesis via de novo pathway; AMP from IMP: step 1/2. In terms of biological role, plays an important role in the de novo pathway of purine nucleotide biosynthesis. Catalyzes the first committed step in the biosynthesis of AMP from IMP. The chain is Adenylosuccinate synthetase from Leuconostoc citreum (strain KM20).